The chain runs to 212 residues: Fibrillarin-like rRNA/tRNA 2'-O-methyltransferase (212 aa).

S-adenosyl-L-methionine-binding positions include 73-74, 91-92, 116-117, and 136-139; these read TT, EI, DA, and DVAQ.

This sequence belongs to the methyltransferase superfamily. Fibrillarin family. In terms of assembly, interacts with nop5. Component of box C/D small ribonucleoprotein (sRNP) particles that contain rpl7ae, FlpA and nop5, plus a guide RNA.

Its function is as follows. Involved in pre-rRNA and tRNA processing. Utilizes the methyl donor S-adenosyl-L-methionine to catalyze the site-specific 2'-hydroxyl methylation of ribose moieties in rRNA and tRNA. Site specificity is provided by a guide RNA that base pairs with the substrate. Methylation occurs at a characteristic distance from the sequence involved in base pairing with the guide RNA. This Methanothrix thermoacetophila (strain DSM 6194 / JCM 14653 / NBRC 101360 / PT) (Methanosaeta thermophila) protein is Fibrillarin-like rRNA/tRNA 2'-O-methyltransferase.